A 665-amino-acid chain; its full sequence is MVQLSELASALNQTESKGVFSKHPKGFGFVHPEDATDKTNDIYIGKNDTKFAMDGDKVTVKVTYPKTEKRGASGQITKINERAVVDTVGTYRSLSNRQVKALGYKGRIELYNDRISDTLYIKQPLSGVQEEDVVSLKITQYPTNTKTFEGKITGIIGHKGEVGLDILEVLCAMKIPQEFSSETLAEAEAFSEKLTDSDLQDREDYRNEITYTIDGDDSKDLDDAIHVKKLSNWHFELGVHIADVSHYVTEGSSLDEEAYSRATSVYVTDRVVPMLPVKLSNNLCSLNEAQERLTMSCLMEIDDKGKIVSYKISPSVIKTTYRMTYNNVNKMIHQGQEGHREALENFFKITDSIKVAVELHEILETMRKDRGMIEFDESEAKIILDEKGHPIEIVKRDRDTAERMIESFMLMANETVALDFQKKKLPSLYRVHDNPKEKSFAKLMEAAANAGFSLNSDSHQAINFFADEIKGTSSEKALTYQLRHTMSTAVYSEKNTKHFGLAATNYTHFTSPIRRYPDLIIHRLLHLYPSDHSNHTKDEWKERLPEIASHSSDMEHRAVVTERIIDAMKKAEYMSERIGEVYTGTITGLQKFGIFVALDNTVEGLIRVPNLHTGTTEELEFDEEASIFKGKKSETVYQIGQEIKIRVIAANKRKGTVDFEQIAPE.

The 327-residue stretch at 202 to 528 folds into the RNB domain; it reads REDYRNEITY…LIIHRLLHLY (327 aa). In terms of domain architecture, S1 motif spans 579–662; it reads GEVYTGTITG…RKGTVDFEQI (84 aa).

Belongs to the RNR ribonuclease family. RNase R subfamily.

The protein localises to the cytoplasm. It carries out the reaction Exonucleolytic cleavage in the 3'- to 5'-direction to yield nucleoside 5'-phosphates.. Functionally, 3'-5' exoribonuclease that releases 5'-nucleoside monophosphates and is involved in maturation of structured RNAs. The protein is Ribonuclease R 2 of Lactococcus lactis subsp. lactis (strain IL1403) (Streptococcus lactis).